The chain runs to 341 residues: MKKISNNIFLIMLIFGTLVTISSNSWLGAWMGLEINLLSFIPLMNDNKKNLLTSESSLKYFLTQAFASSILLFAIIMLMFLYNNNLSLYNSFNEILILSTLLLKSGAAPFHFWFPEVMEGLSWVNGLILMTWQKIAPLMLISYNFIYNFFMISIILSMLIGSLGGLNQTSIRKLMAFSSINHLGWMLLAMMNNEMLWMTYFLMYSLLSFSIVLMFNNFKLFYFNQIFNLSMMNPIIKLLIFLNLLSLGGLPPFLGFLPKWLVIQNLTAMNQLFILTISVCLTLITLYFYLRLSYSIFMLNYQKNSWMLKNNFNNKMSSISLIFNFISIGGLVMISMIYIIM.

9 helical membrane-spanning segments follow: residues 8–28, 61–81, 95–115, 145–165, 174–191, 195–215, 238–258, 272–292, and 321–341; these read IFLI…SWLG, FLTQ…LMFL, ILIL…FWFP, FIYN…SLGG, LMAF…LAMM, MLWM…VLMF, LLIF…GFLP, LFIL…YLRL, and LIFN…YIIM.

This sequence belongs to the complex I subunit 2 family.

It is found in the mitochondrion inner membrane. It carries out the reaction a ubiquinone + NADH + 5 H(+)(in) = a ubiquinol + NAD(+) + 4 H(+)(out). Core subunit of the mitochondrial membrane respiratory chain NADH dehydrogenase (Complex I) that is believed to belong to the minimal assembly required for catalysis. Complex I functions in the transfer of electrons from NADH to the respiratory chain. The immediate electron acceptor for the enzyme is believed to be ubiquinone. This chain is NADH-ubiquinone oxidoreductase chain 2 (mt:ND2), found in Anopheles gambiae (African malaria mosquito).